Consider the following 24-residue polypeptide: Cytochrome c3-2 (24 aa).

A disordered region spans residues Gly-1 to Pro-24.

Binds 4 heme groups per subunit.

It localises to the periplasm. Functionally, participates in sulfate respiration coupled with phosphorylation by transferring electrons from the enzyme dehydrogenase to ferredoxin. The polypeptide is Cytochrome c3-2 (Nitratidesulfovibrio vulgaris (Desulfovibrio vulgaris)).